A 1335-amino-acid polypeptide reads, in one-letter code: MSRKENLNRSSSSNSIEFNRDRDRDSSNISNSSNINCNNSSQTPPIPQHNSLSGRSKHSSPIHSLKKKGSLVRQGIEDLFSSLSVDTHSSSNSNNNSSSNNNNNNNNHNINSSSESSTPTTPRSSFTPQVTMNSNQSSGNNSPQLSSRSSSQSTLIPSNEPTKSLAKFFLLAQQVDYVGDSSSTLLPVENLGLLSIQWKTYFTIGLNSTTTGYDVLKYISIKTNRDLKSLTLADSDGKIIDNDYILTQQRCKKFVVVEDLNIDDLKMKQLNHLQQLPPPSQQQLPPPQSHQQQLLQQQLQQRLQNQNQNQNNNSNSNSNSSSSSSCSTPQSIVSQQQKLHQMLLNQQQIQSSQSTTPTNSSQKSSPNKVTDHQHVENCNFTSPSPSSPSSPSSPSSGMILDGFNLDGNGGRPTPLIITPSSPSSMRKNPPAIPPRSPSSFSGGSPLNNILLNNTELISEPVTTTTTTTTTTSSSSSLSVTTTISNPNYTQNLPTTPLSNSSSNNNNNGSFITLQDTTNNKSIINNNRESPPESPMGSRKSSGSSNTTSSTTNTTTPSSSSLTTSSGKESRDRDSKDKEKDLIGSGNNNNNNNNNNNNNNNNNKVEKEKENYCKFLDAVNSFNMVGNNGVLFNGEANRNMKLTNAQEEKCKILDNYFNHYYQELFKYLHQRHRRIKTIEDFTVESRMDRQGAEQWMKKQFEKETNFLRNKRAGMKLKEFKILTQIGKGGFGQVFLAQKKDTGDIVTLKRLKKQTVEWANQRNQVSQEKSVMLVDNKWITKLLYSFQDANYLYLAMEYHCGGDFRALLNNLGTLSEDEARFYMIEMIEAISSLHEMGIVHRDCKPSNFVLDKLGHIKLIDFGLSKEGIEKRNGWNKATMNELRKSCLSASFTSNTMKAASAYLSGGTNVMAYRRPIAHSAVGSPEYMSPEIVNDQGYDMTCDYWSLGCVFVEMLCGFNPFCADTPNDVFINILRWKETLDWPLFTQELSVEAADLLKNMLMEQPHRLGGKGKQDFKNHPFFKNHNWDEIVNGQVKPPFVPKVESDIDTSYFEDAVNNDSSTWDIDDNDCGGYGSGGYGGGGPQARDPFNNLKIPFFTYRKSSALSLSMSSEIAQSLNYNNGNTYSNYTSNNNNNNLHNNQIHEKNGNSGYNHFHFDSIEQQNQYQLSLLSPNSSDKSIGMIQYIKKFRYQQLQQQLQQHFQQQNHLQQLKSNHRKSPTRQLISSLLYKGDDKTSILQNYSSQSQPSLANQLQSSSSSPSPSLQSQSQSPSLQSSSKSTPNLSSSLLENPVKEELEYKNQTENEVEIKKENESEEIQSLRDQLKEIIIYEDYDQEYSI.

4 disordered regions span residues 1–70, 85–158, 276–447, and 462–603; these read MSRK…KKGS, VDTH…LIPS, LPPP…SPLN, and TTTT…NNNK. Residues 8–17 are compositionally biased toward polar residues; that stretch reads NRSSSSNSIE. Residues 27-41 show a composition bias toward low complexity; that stretch reads SNISNSSNINCNNSS. The segment covering 55–70 has biased composition (basic residues); that stretch reads RSKHSSPIHSLKKKGS. Low complexity predominate over residues 89-117; that stretch reads SSSNSNNNSSSNNNNNNNNHNINSSSESS. Residues 118 to 132 show a composition bias toward polar residues; sequence TPTTPRSSFTPQVTM. Low complexity predominate over residues 133–153; it reads NSNQSSGNNSPQLSSRSSSQS. Positions 276–288 are enriched in pro residues; sequence LPPPSQQQLPPPQ. 6 stretches are compositionally biased toward low complexity: residues 289 to 331, 345 to 368, 382 to 396, 412 to 424, 437 to 447, and 462 to 484; these read SHQQ…TPQS, NQQQ…SPNK, SPSP…SPSS, PTPL…SPSS, PSSFSGGSPLN, and TTTT…TTIS. The span at 485-497 shows a compositional bias: polar residues; that stretch reads NPNYTQNLPTTPL. Low complexity predominate over residues 498–507; that stretch reads SNSSSNNNNN. Polar residues predominate over residues 508–528; that stretch reads GSFITLQDTTNNKSIINNNRE. Low complexity predominate over residues 540–566; it reads SSGSSNTTSSTTNTTTPSSSSLTTSSG. The span at 567-581 shows a compositional bias: basic and acidic residues; that stretch reads KESRDRDSKDKEKDL. Residues 586–602 are compositionally biased toward low complexity; that stretch reads NNNNNNNNNNNNNNNNN. The stretch at 586–613 forms a coiled coil; it reads NNNNNNNNNNNNNNNNNKVEKEKENYCK. Positions 718–1019 constitute a Protein kinase domain; the sequence is FKILTQIGKG…KQDFKNHPFF (302 aa). Residues 724-732 and lysine 747 each bind ATP; that span reads IGKGGFGQV. The active-site Proton acceptor is the aspartate 840. The AGC-kinase C-terminal domain occupies 1020–1106; sequence KNHNWDEIVN…RKSSALSLSM (87 aa). A compositionally biased stretch (low complexity) spans 1239–1284; it reads SQSQPSLANQLQSSSSSPSPSLQSQSQSPSLQSSSKSTPNLSSSLL. The disordered stretch occupies residues 1239–1313; sequence SQSQPSLANQ…IKKENESEEI (75 aa). Over residues 1287 to 1313 the composition is skewed to basic and acidic residues; it reads PVKEELEYKNQTENEVEIKKENESEEI. Residues 1289–1325 are a coiled coil; the sequence is KEELEYKNQTENEVEIKKENESEEIQSLRDQLKEIII.

This sequence belongs to the protein kinase superfamily. AGC Ser/Thr protein kinase family.

The enzyme catalyses L-seryl-[protein] + ATP = O-phospho-L-seryl-[protein] + ADP + H(+). It catalyses the reaction L-threonyl-[protein] + ATP = O-phospho-L-threonyl-[protein] + ADP + H(+). The protein is Probable serine/threonine-protein kinase ndrC (ndrC) of Dictyostelium discoideum (Social amoeba).